We begin with the raw amino-acid sequence, 216 residues long: PRA1 family protein B6 (216 aa).

Residue Ala2 is modified to N-acetylalanine. 5 helical membrane-spanning segments follow: residues 83-103 (LVAILLAASLLTHPFALFLLA), 105-125 (LAASWLFLYFFRPADQPLVIG), 135-155 (LGILCLSTVVVMFMTSVGSLL), 159-179 (LAVGIMGVAIHGAFRAPEDLF), and 186-206 (IGSGLFAFFNNNASNAAAAAI).

This sequence belongs to the PRA1 family. In terms of assembly, interacts with PRA1B1, PRA1B2, PRA1B3, PRA1B4, PRA1B5 and PRA1E. In terms of tissue distribution, expressed in hypocotyls, roots, lateral roots, lateral root caps, columella cells, leaves and stomata.

Its subcellular location is the endoplasmic reticulum membrane. Its function is as follows. May be involved in both secretory and endocytic intracellular trafficking in the endosomal/prevacuolar compartments. The sequence is that of PRA1 family protein B6 (PRA1B6) from Arabidopsis thaliana (Mouse-ear cress).